The chain runs to 96 residues: Mitochondrial import inner membrane translocase subunit Tim13-A (96 aa).

The Twin CX3C motif signature appears at 47–70 (CFRKCIGKPGGSLDNSEQKCIAMC). Cystine bridges form between Cys47-Cys70 and Cys51-Cys66.

The protein belongs to the small Tim family. As to quaternary structure, heterohexamer; composed of 3 copies of TIMM8 (TIMM8A or TIMM8B) and 3 copies of TIMM13, named soluble 70 kDa complex. Associates with the TIM22 complex, whose core is composed of TIMM22.

Its subcellular location is the mitochondrion inner membrane. Mitochondrial intermembrane chaperone that participates in the import and insertion of some multi-pass transmembrane proteins into the mitochondrial inner membrane. Also required for the transfer of beta-barrel precursors from the TOM complex to the sorting and assembly machinery (SAM complex) of the outer membrane. Acts as a chaperone-like protein that protects the hydrophobic precursors from aggregation and guide them through the mitochondrial intermembrane space. The TIMM8-TIMM13 complex mediates the import of some proteins while the predominant TIMM9-TIMM10 70 kDa complex mediates the import of much more proteins. The protein is Mitochondrial import inner membrane translocase subunit Tim13-A (timm13-a) of Xenopus laevis (African clawed frog).